The chain runs to 396 residues: Elongation factor Tu 2 (396 aa).

The 197-residue stretch at 10 to 206 folds into the tr-type G domain; the sequence is KPHVNVGTIG…TLDTYIPEPE (197 aa). The interval 19–26 is G1; it reads GHVDHGKT. 19–26 contributes to the GTP binding site; it reads GHVDHGKT. Residue threonine 26 coordinates Mg(2+). A G2 region spans residues 60-64; sequence GITIN. A G3 region spans residues 81 to 84; it reads DCPG. Residues 81-85 and 136-139 contribute to the GTP site; these read DCPGH and NKCD. Residues 136-139 form a G4 region; that stretch reads NKCD. The interval 174-176 is G5; that stretch reads SAL.

This sequence belongs to the TRAFAC class translation factor GTPase superfamily. Classic translation factor GTPase family. EF-Tu/EF-1A subfamily. Monomer.

Its subcellular location is the cytoplasm. The catalysed reaction is GTP + H2O = GDP + phosphate + H(+). Its function is as follows. GTP hydrolase that promotes the GTP-dependent binding of aminoacyl-tRNA to the A-site of ribosomes during protein biosynthesis. The protein is Elongation factor Tu 2 of Psychrobacter sp. (strain PRwf-1).